Reading from the N-terminus, the 647-residue chain is 1-phosphatidylinositol 4,5-bisphosphate phosphodiesterase zeta-1 (647 aa).

The EF-hand domain occupies C43–R78. The 145-residue stretch at Q163–R307 folds into the PI-PLC X-box domain. Active-site residues include H178 and H223. A PI-PLC Y-box domain is found at L386 to R502. The C2 domain maps to R502–S627.

Interacts via its C2 domain with PtdIns(3)P and, to a lesser extent, PtdIns(5)P in vitro. The cofactor is Ca(2+). Highly expressed in postpuberal testis, where expression is sperm cell-specific. Also expressed in brain of both sexes.

It is found in the nucleus. Its subcellular location is the cytoplasm. It localises to the perinuclear region. It carries out the reaction a 1,2-diacyl-sn-glycero-3-phospho-(1D-myo-inositol-4,5-bisphosphate) + H2O = 1D-myo-inositol 1,4,5-trisphosphate + a 1,2-diacyl-sn-glycerol + H(+). In terms of biological role, the production of the second messenger molecules diacylglycerol (DAG) and inositol 1,4,5-trisphosphate (IP3) is mediated by activated phosphatidylinositol-specific phospholipase C enzymes. In vitro, hydrolyzes PtdIns(4,5)P2 in a Ca(2+)-dependent manner. Triggers intracellular Ca(2+) oscillations in oocytes solely during M phase and is involved in inducing oocyte activation and initiating embryonic development up to the blastocyst stage. Is therefore a strong candidate for the egg-activating soluble sperm factor that is transferred from the sperm into the egg cytoplasm following gamete membrane fusion. May exert an inhibitory effect on phospholipase-C-coupled processes that depend on calcium ions and protein kinase C, including CFTR trafficking and function. This Mus musculus (Mouse) protein is 1-phosphatidylinositol 4,5-bisphosphate phosphodiesterase zeta-1.